The following is a 509-amino-acid chain: Glutamyl-tRNA(Gln) amidotransferase subunit B, mitochondrial (509 aa).

Belongs to the GatB/GatE family. GatB subfamily. In terms of assembly, subunit of the heterotrimeric GatFAB amidotransferase (AdT) complex, composed of A, B and F subunits.

It is found in the mitochondrion. It catalyses the reaction L-glutamyl-tRNA(Gln) + L-glutamine + ATP + H2O = L-glutaminyl-tRNA(Gln) + L-glutamate + ADP + phosphate + H(+). In terms of biological role, allows the formation of correctly charged Gln-tRNA(Gln) through the transamidation of misacylated Glu-tRNA(Gln) in the mitochondria. The reaction takes place in the presence of glutamine and ATP through an activated gamma-phospho-Glu-tRNA(Gln). The protein is Glutamyl-tRNA(Gln) amidotransferase subunit B, mitochondrial of Candida dubliniensis (strain CD36 / ATCC MYA-646 / CBS 7987 / NCPF 3949 / NRRL Y-17841) (Yeast).